Here is a 408-residue protein sequence, read N- to C-terminus: Succinylornithine transaminase (408 aa).

Residue lysine 252 is modified to N6-(pyridoxal phosphate)lysine.

The protein belongs to the class-III pyridoxal-phosphate-dependent aminotransferase family. AstC subfamily. Pyridoxal 5'-phosphate is required as a cofactor.

It catalyses the reaction N(2)-succinyl-L-ornithine + 2-oxoglutarate = N-succinyl-L-glutamate 5-semialdehyde + L-glutamate. The protein operates within amino-acid degradation; L-arginine degradation via AST pathway; L-glutamate and succinate from L-arginine: step 3/5. Functionally, catalyzes the transamination of N(2)-succinylornithine and alpha-ketoglutarate into N(2)-succinylglutamate semialdehyde and glutamate. Can also act as an acetylornithine aminotransferase. The chain is Succinylornithine transaminase from Salmonella dublin (strain CT_02021853).